Consider the following 218-residue polypeptide: ATP phosphoribosyltransferase (218 aa).

The protein belongs to the ATP phosphoribosyltransferase family. Short subfamily. In terms of assembly, heteromultimer composed of HisG and HisZ subunits.

It is found in the cytoplasm. It catalyses the reaction 1-(5-phospho-beta-D-ribosyl)-ATP + diphosphate = 5-phospho-alpha-D-ribose 1-diphosphate + ATP. The protein operates within amino-acid biosynthesis; L-histidine biosynthesis; L-histidine from 5-phospho-alpha-D-ribose 1-diphosphate: step 1/9. Functionally, catalyzes the condensation of ATP and 5-phosphoribose 1-diphosphate to form N'-(5'-phosphoribosyl)-ATP (PR-ATP). Has a crucial role in the pathway because the rate of histidine biosynthesis seems to be controlled primarily by regulation of HisG enzymatic activity. The protein is ATP phosphoribosyltransferase of Burkholderia mallei (strain ATCC 23344).